We begin with the raw amino-acid sequence, 194 residues long: Cytochrome bo(3) ubiquinol oxidase subunit 3 (194 aa).

Over 1–18 (MKKKYKIDTNIFSKELLG) the chain is Cytoplasmic. A helical transmembrane segment spans residues 19 to 41 (FWLYLMSDCIIFCTLFSVYFILV). The Extracellular segment spans residues 42–55 (DNVAQGPSGHNIFQ). Residues 56–78 (NNLIIIETFLLLFSSFSCNLVLF) traverse the membrane as a helical segment. The Cytoplasmic segment spans residues 79 to 84 (EMKNKN). The helical transmembrane segment at 85 to 107 (LYMVFLWLGITFLLGLLFVFLEL) threads the bilayer. The Extracellular segment spans residues 108–126 (FEFFHLINLGFGPTRSGFL). A helical transmembrane segment spans residues 127 to 149 (SSFFVLIATHGIHVISGLIWIIV). Topologically, residues 150–169 (MIKYVYTFNITNLIYYRMLC) are cytoplasmic. The helical transmembrane segment at 170–192 (LNLFWHFLDIVWVFIFSFVYLFG) threads the bilayer. Over 193-194 (MV) the chain is Extracellular.

This sequence belongs to the cytochrome c oxidase subunit 3 family. In terms of assembly, heterooctamer of two A chains, two B chains, two C chains and two D chains.

It is found in the cell membrane. Cytochrome bo(3) ubiquinol terminal oxidase is the component of the aerobic respiratory chain of E.coli that predominates when cells are grown at high aeration. Has proton pump activity across the membrane in addition to electron transfer, pumping 2 protons/electron. This is Cytochrome bo(3) ubiquinol oxidase subunit 3 (cyoC) from Buchnera aphidicola subsp. Baizongia pistaciae (strain Bp).